The following is a 393-amino-acid chain: Riboflavin biosynthesis protein RibBA (393 aa).

Residues 1–200 (MQFDNIDSAL…IDDLIEYRKK (200 aa)) form a DHBP synthase region. Residues 27 to 28 (RE), Asp-32, 139 to 143 (RNGHT), and Glu-163 contribute to the D-ribulose 5-phosphate site. Glu-28 serves as a coordination point for Mg(2+). His-142 provides a ligand contact to Mg(2+). The tract at residues 201–393 (LEPEIEFKAK…TKKIKMGHLI (193 aa)) is GTP cyclohydrolase II. 249-253 (RLHSA) is a GTP binding site. The Zn(2+) site is built by Cys-254, Cys-265, and Cys-267. GTP-binding positions include Gln-270, 291-293 (EGR), and Thr-313. The Proton acceptor; for GTP cyclohydrolase activity role is filled by Asp-325. Arg-327 acts as the Nucleophile; for GTP cyclohydrolase activity in catalysis. GTP-binding residues include Ser-348 and Lys-353.

It in the N-terminal section; belongs to the DHBP synthase family. This sequence in the C-terminal section; belongs to the GTP cyclohydrolase II family. The cofactor is Mg(2+). Requires Mn(2+) as cofactor. Zn(2+) is required as a cofactor.

It carries out the reaction D-ribulose 5-phosphate = (2S)-2-hydroxy-3-oxobutyl phosphate + formate + H(+). It catalyses the reaction GTP + 4 H2O = 2,5-diamino-6-hydroxy-4-(5-phosphoribosylamino)-pyrimidine + formate + 2 phosphate + 3 H(+). It functions in the pathway cofactor biosynthesis; riboflavin biosynthesis; 2-hydroxy-3-oxobutyl phosphate from D-ribulose 5-phosphate: step 1/1. Its pathway is cofactor biosynthesis; riboflavin biosynthesis; 5-amino-6-(D-ribitylamino)uracil from GTP: step 1/4. Catalyzes the conversion of D-ribulose 5-phosphate to formate and 3,4-dihydroxy-2-butanone 4-phosphate. In terms of biological role, catalyzes the conversion of GTP to 2,5-diamino-6-ribosylamino-4(3H)-pyrimidinone 5'-phosphate (DARP), formate and pyrophosphate. The chain is Riboflavin biosynthesis protein RibBA from Staphylococcus aureus (strain MSSA476).